A 303-amino-acid chain; its full sequence is N-acetyl-D-glucosamine kinase (303 aa).

ATP contacts are provided by residues 4 to 11 (GFDIGGTK) and 133 to 140 (GVGGGLIF). Zn(2+) contacts are provided by His157, Cys177, Cys179, and Cys184.

Belongs to the ROK (NagC/XylR) family. NagK subfamily.

It carries out the reaction N-acetyl-D-glucosamine + ATP = N-acetyl-D-glucosamine 6-phosphate + ADP + H(+). It functions in the pathway cell wall biogenesis; peptidoglycan recycling. In terms of biological role, catalyzes the phosphorylation of N-acetyl-D-glucosamine (GlcNAc) derived from cell-wall degradation, yielding GlcNAc-6-P. This chain is N-acetyl-D-glucosamine kinase, found in Escherichia coli O9:H4 (strain HS).